Consider the following 1025-residue polypeptide: Protein mono-ADP-ribosyltransferase PARP10 (1025 aa).

Position 101 is a phosphothreonine (threonine 101). An ADP-ribosyl glutamic acid modification is found at glutamate 106. Lysine 140 carries the post-translational modification N6-(ADP-ribosyl)lysine. The tract at residues 318-346 is disordered; sequence GIMTTGSGQEPGQSGTSLRTGPMGSLGQA. The span at 321–336 shows a compositional bias: polar residues; the sequence is TTGSGQEPGQSGTSLR. Serine 378, serine 423, and serine 431 each carry phosphoserine. Disordered stretches follow at residues 569-589 and 617-644; these read VLPG…DQED and LEEE…APST. Residues 617-639 show a composition bias toward acidic residues; the sequence is LEEEGPQEQPEEEVTPGHEEEEP. Short sequence motifs (ubiquitin-interacting) lie at residues 650-667 and 673-690; these read LEEE…LEPQ and QEEA…LLEQ. A Phosphoserine modification is found at serine 663. The myc binding stretch occupies residues 700-907; the sequence is DGGTDGKAQL…CAHGFNRSFC (208 aa). A PARP catalytic domain is found at 806–1025; sequence PTLAGQTLKG…SGLPGRSPDT (220 aa). The short motif at 831-838 is the PIP-box element; that stretch reads QEVVRAFY. Glutamate 882 is subject to ADP-ribosyl glutamic acid. Lysine 916 is subject to N6-(ADP-ribosyl)lysine. Lysine 916 carries the N6-acetyllysine modification. A disordered region spans residues 1006–1025; sequence HVPRASPDDPSGLPGRSPDT. At serine 1011 the chain carries Phosphoserine.

Belongs to the ARTD/PARP family. In terms of assembly, interacts with MYC. Interacts with PARP14. Interacts (via-PIP box and ubiquitin-interacting motifs) with PCNA. In terms of processing, stimulated through its phosphorylation by CDK2. Acquires CDK-dependent phosphorylation through late-G1 to S phase, and from prometaphase to cytokinesis in the nucleolar organizing regions. Phosphorylation is suppressed in growth-arrested cells. Post-translationally, auto-mono-ADP-ribosylated on glutamate and lysine residues. As to expression, highly expressed in spleen and thymus. Intermediate levels in liver, kidney, pancreas, prostate, testis, ovary, intestine, and leukocytes. Low expression in heart, brain, placenta, lung, skeletal muscle, and colon.

The protein resides in the nucleus. Its subcellular location is the nucleolus. The protein localises to the cytoplasm. It carries out the reaction L-lysyl-[protein] + NAD(+) = N(6)-(ADP-D-ribosyl)-L-lysyl-[protein] + nicotinamide + H(+). The enzyme catalyses L-aspartyl-[protein] + NAD(+) = 4-O-(ADP-D-ribosyl)-L-aspartyl-[protein] + nicotinamide. The catalysed reaction is L-glutamyl-[protein] + NAD(+) = 5-O-(ADP-D-ribosyl)-L-glutamyl-[protein] + nicotinamide. Functionally, ADP-ribosyltransferase that mediates mono-ADP-ribosylation of glutamate and aspartate residues on target proteins. In contrast to PARP1 and PARP2, it is not able to mediate poly-ADP-ribosylation. Catalyzes mono-ADP-ribosylation of GSK3B, leading to negatively regulate GSK3B kinase activity. Involved in translesion DNA synthesis in response to DNA damage via its interaction with PCNA. The polypeptide is Protein mono-ADP-ribosyltransferase PARP10 (Homo sapiens (Human)).